A 398-amino-acid polypeptide reads, in one-letter code: Ornithine aminotransferase (398 aa).

K256 bears the N6-(pyridoxal phosphate)lysine mark.

This sequence belongs to the class-III pyridoxal-phosphate-dependent aminotransferase family. OAT subfamily. Pyridoxal 5'-phosphate is required as a cofactor.

The protein resides in the cytoplasm. The enzyme catalyses a 2-oxocarboxylate + L-ornithine = L-glutamate 5-semialdehyde + an L-alpha-amino acid. Its pathway is amino-acid biosynthesis; L-proline biosynthesis; L-glutamate 5-semialdehyde from L-ornithine: step 1/1. Catalyzes the interconversion of ornithine to glutamate semialdehyde. This chain is Ornithine aminotransferase, found in Halalkalibacterium halodurans (strain ATCC BAA-125 / DSM 18197 / FERM 7344 / JCM 9153 / C-125) (Bacillus halodurans).